We begin with the raw amino-acid sequence, 470 residues long: ATP synthase subunit beta (470 aa).

ATP is bound at residue 158 to 165 (GGAGVGKT).

It belongs to the ATPase alpha/beta chains family. As to quaternary structure, F-type ATPases have 2 components, CF(1) - the catalytic core - and CF(0) - the membrane proton channel. CF(1) has five subunits: alpha(3), beta(3), gamma(1), delta(1), epsilon(1). CF(0) has three main subunits: a(1), b(2) and c(9-12). The alpha and beta chains form an alternating ring which encloses part of the gamma chain. CF(1) is attached to CF(0) by a central stalk formed by the gamma and epsilon chains, while a peripheral stalk is formed by the delta and b chains.

It is found in the cell membrane. It catalyses the reaction ATP + H2O + 4 H(+)(in) = ADP + phosphate + 5 H(+)(out). Produces ATP from ADP in the presence of a proton gradient across the membrane. The catalytic sites are hosted primarily by the beta subunits. The protein is ATP synthase subunit beta of Halalkalibacterium halodurans (strain ATCC BAA-125 / DSM 18197 / FERM 7344 / JCM 9153 / C-125) (Bacillus halodurans).